A 222-amino-acid chain; its full sequence is Uracil-DNA glycosylase (222 aa).

The active-site Proton acceptor is the D61.

It belongs to the uracil-DNA glycosylase (UDG) superfamily. UNG family.

The protein resides in the cytoplasm. The enzyme catalyses Hydrolyzes single-stranded DNA or mismatched double-stranded DNA and polynucleotides, releasing free uracil.. Functionally, excises uracil residues from the DNA which can arise as a result of misincorporation of dUMP residues by DNA polymerase or due to deamination of cytosine. In Actinobacillus succinogenes (strain ATCC 55618 / DSM 22257 / CCUG 43843 / 130Z), this protein is Uracil-DNA glycosylase.